Reading from the N-terminus, the 271-residue chain is Digeranylgeranylglyceryl phosphate synthase (271 aa).

8 consecutive transmembrane segments (helical) span residues 11–31 (INCA…GARL), 33–53 (VGAV…NAIN), 88–108 (FAVG…IAAL), 125–145 (LIGN…GAAV), 149–169 (PAPA…REIL), 201–221 (VFAI…VVGW), 224–244 (LVLA…AVAG), and 251–271 (AQRV…ASLL).

The protein belongs to the UbiA prenyltransferase family. DGGGP synthase subfamily. Mg(2+) is required as a cofactor.

The protein localises to the cell membrane. The enzyme catalyses sn-3-O-(geranylgeranyl)glycerol 1-phosphate + (2E,6E,10E)-geranylgeranyl diphosphate = 2,3-bis-O-(geranylgeranyl)-sn-glycerol 1-phosphate + diphosphate. It participates in membrane lipid metabolism; glycerophospholipid metabolism. In terms of biological role, prenyltransferase that catalyzes the transfer of the geranylgeranyl moiety of geranylgeranyl diphosphate (GGPP) to the C2 hydroxyl of (S)-3-O-geranylgeranylglyceryl phosphate (GGGP). This reaction is the second ether-bond-formation step in the biosynthesis of archaeal membrane lipids. The protein is Digeranylgeranylglyceryl phosphate synthase of Methanopyrus kandleri (strain AV19 / DSM 6324 / JCM 9639 / NBRC 100938).